Reading from the N-terminus, the 391-residue chain is Small ribosomal subunit protein bS1 (391 aa).

4 consecutive S1 motif domains span residues 16–90 (GDKV…LSRR), 108–173 (NEII…LSRK), 194–262 (GDVI…LSIK), and 279–348 (NDVI…LSIK).

Belongs to the bacterial ribosomal protein bS1 family.

Binds mRNA; thus facilitating recognition of the initiation point. It is needed to translate mRNA with a short Shine-Dalgarno (SD) purine-rich sequence. The protein is Small ribosomal subunit protein bS1 (rpsA) of Staphylococcus aureus (strain N315).